The sequence spans 361 residues: Divinyl chlorophyll a/b light-harvesting protein PcbE (361 aa).

Helical transmembrane passes span 27 to 47 (FIGS…ANTL), 88 to 108 (VAFV…AGLL), 149 to 169 (FILG…VEWA), 210 to 230 (VMGG…FHIA), 250 to 270 (AVLS…AFWC), and 315 to 335 (LSNV…WHAI).

It belongs to the PsbB/PsbC family. IsiA/Pcb subfamily. In terms of assembly, the antenna complex consists of divinyl chlorophylls (a and b) and divinyl chlorophyll a/b binding proteins and binds more divinyl chlorophyll b than does the antenna complex from high-light-adapted Prochlorococcus. Requires divinyl chlorophyll a as cofactor. Divinyl chlorophyll b is required as a cofactor.

The protein resides in the cellular thylakoid membrane. Functionally, the antenna complex functions as a light receptor, it captures and delivers excitation energy to photosystems II and I. The Prochlorales pcb genes are not related to higher plant LHCs. The chain is Divinyl chlorophyll a/b light-harvesting protein PcbE (pcbE) from Prochlorococcus marinus (strain SARG / CCMP1375 / SS120).